Reading from the N-terminus, the 384-residue chain is MASLFLTIISLLFAAFSSSVVEAAYSNGYTIPKLLPNPIDSCWRRNPYWASNRRALADCAVGFGKSAVGGKYGSIYVVTNPSDDPENPRPGTLRYAVIQSKPLWITFARDMVIVLRNELIMNSYKTIDGRGAKVEIAYGPCITIQHVSHVIIHGISIHDCKPGKSGRVRSSPTHVGSRKGSDGDAIAIFDSSHIWIDHCFFSRCQDGLIDVLHASTAVTISNNYFTQHDKVMLLGHNDNNVEDKIMRVTIAFNHFGPGLIERMPRVRRGYAHVANNRYEKWQMYAIGGSADPTIFSEGNYFVASDDPSKKQVTKRIDSGYDWKRWKWRTSKDVFKNGAYFVPSGYGTVTPLYGRAERFPVSHGSLVPLLTSSAGPLHCYSGRIC.

The signal sequence occupies residues M1 to A23. The Ca(2+) site is built by D182, D206, and D210. R262 is a catalytic residue.

Belongs to the polysaccharide lyase 1 family. Requires Ca(2+) as cofactor.

The enzyme catalyses Eliminative cleavage of (1-&gt;4)-alpha-D-galacturonan to give oligosaccharides with 4-deoxy-alpha-D-galact-4-enuronosyl groups at their non-reducing ends.. The protein operates within glycan metabolism; pectin degradation; 2-dehydro-3-deoxy-D-gluconate from pectin: step 2/5. This is Putative pectate lyase 2 from Arabidopsis thaliana (Mouse-ear cress).